Reading from the N-terminus, the 213-residue chain is 5-deoxy-D-ribulose 1-phosphate aldolase (213 aa).

Substrate is bound by residues 28 to 29, 45 to 46, and 74 to 76; these read GN, SG, and SSE. Catalysis depends on Glu-76, which acts as the Proton donor/acceptor. Positions 76, 95, 97, and 157 each coordinate Mn(2+).

It belongs to the aldolase class II family. In terms of assembly, forms homooligomers, possibly homotetramers. The cofactor is Mn(2+).

The catalysed reaction is 5-deoxy-D-ribulose 1-phosphate = dihydroxyacetone phosphate + acetaldehyde. It participates in carbohydrate degradation. In terms of biological role, catalyzes the cleavage of 5-deoxy-D-ribulose 1-phosphate to yield dihydroxyacetone phosphate (DHAP) and acetaldehyde, as part of a 5-deoxyribose salvage pathway that recycles this toxic radical SAM enzyme by-product to mainstream metabolites. Is also able to catalyze the reverse reaction, using several aldehydes as substrate, with acetaldehyde being the preferred substrate. This chain is 5-deoxy-D-ribulose 1-phosphate aldolase, found in Bacillus thuringiensis serovar kurstaki (strain ATCC 35866 / NRRL B-4488 / HD73).